The chain runs to 49 residues: MADNIILECTECGDRSYLSKKNKRKHPERLTLKKYCPVERQVTLHRETK.

This sequence belongs to the bacterial ribosomal protein bL33 family.

The chain is Large ribosomal subunit protein bL33A from Lactobacillus delbrueckii subsp. bulgaricus (strain ATCC 11842 / DSM 20081 / BCRC 10696 / JCM 1002 / NBRC 13953 / NCIMB 11778 / NCTC 12712 / WDCM 00102 / Lb 14).